A 498-amino-acid chain; its full sequence is Sulfate adenylyltransferase subunit 1 (498 aa).

Positions 30–246 constitute a tr-type G domain; the sequence is TRPLRLITCG…LELATTRSAQ (217 aa). Positions 39–46 are G1; sequence GSVDDGKS. 39–46 serves as a coordination point for GTP; sequence GSVDDGKS. The G2 stretch occupies residues 97-101; sequence GITID. Residues 118 to 121 are G3; sequence DTPG. Residues 118 to 122 and 173 to 176 contribute to the GTP site; these read DTPGH and NKID. Positions 173-176 are G4; sequence NKID. Positions 210–212 are G5; the sequence is SAL.

It belongs to the TRAFAC class translation factor GTPase superfamily. Classic translation factor GTPase family. CysN/NodQ subfamily. In terms of assembly, heterodimer composed of CysD, the smaller subunit, and CysN.

It catalyses the reaction sulfate + ATP + H(+) = adenosine 5'-phosphosulfate + diphosphate. The protein operates within sulfur metabolism; hydrogen sulfide biosynthesis; sulfite from sulfate: step 1/3. Its function is as follows. With CysD forms the ATP sulfurylase (ATPS) that catalyzes the adenylation of sulfate producing adenosine 5'-phosphosulfate (APS) and diphosphate, the first enzymatic step in sulfur assimilation pathway. APS synthesis involves the formation of a high-energy phosphoric-sulfuric acid anhydride bond driven by GTP hydrolysis by CysN coupled to ATP hydrolysis by CysD. This Rhizobium meliloti (strain 1021) (Ensifer meliloti) protein is Sulfate adenylyltransferase subunit 1.